A 384-amino-acid chain; its full sequence is Protein Brevis radix-like 4 (384 aa).

Disordered regions lie at residues 1–35 (MLTC…SQLK) and 50–78 (PCTA…SDFE). The BRX 1 domain occupies 150–205 (KEWVAQVEPGVLITFVSLPGGGNDLKRIRFSRDMFNKLQAQRWWADNYDKVMELYN). Disordered regions lie at residues 214–270 (FPLP…DHNS) and 304–325 (SIRS…SNAS). Basic and acidic residues predominate over residues 221 to 235 (RSEDENAKVEYHPED). The segment covering 260-270 (YSSSDSLDHNS) has biased composition (polar residues). Over residues 309–318 (SSRDADRSEE) the composition is skewed to basic and acidic residues. The region spanning 329–384 (NEWVEQDEPGVYITIKVLPGGKRELRRVRFSRERFGEMHARLWWEENRARIHEQYL) is the BRX 2 domain.

It belongs to the BRX family. Expressed in roots.

Its subcellular location is the nucleus. This is Protein Brevis radix-like 4 (BRXL4) from Arabidopsis thaliana (Mouse-ear cress).